The primary structure comprises 335 residues: Mycobacterial beta-ketoacyl-[acyl-carrier-protein] synthase III (335 aa).

Active-site residues include Cys-122 and His-258. The ACP-binding stretch occupies residues 259–263; the sequence is QANSR. Asn-289 is an active-site residue.

This sequence belongs to the thiolase-like superfamily. FabH family. As to quaternary structure, homodimer.

The protein localises to the cytoplasm. It catalyses the reaction malonyl-[ACP] + dodecanoyl-CoA + H(+) = 3-oxotetradecanoyl-[ACP] + CO2 + CoA. Its pathway is lipid metabolism; fatty acid biosynthesis. The protein operates within lipid metabolism; mycolic acid biosynthesis. Catalyzes the condensation reaction of fatty acid synthesis by the addition to an acyl acceptor of two carbons from malonyl-ACP. Catalyzes the first condensation reaction which initiates fatty acid synthesis and may therefore play a role in governing the total rate of fatty acid production. Possesses both acetoacetyl-ACP synthase and acetyl transacylase activities. Its substrate specificity determines the biosynthesis of branched-chain and/or straight-chain of fatty acids. The protein is Mycobacterial beta-ketoacyl-[acyl-carrier-protein] synthase III of Mycobacterium avium (strain 104).